A 278-amino-acid polypeptide reads, in one-letter code: Probable endonuclease 4 (278 aa).

Histidine 70, histidine 108, glutamate 143, aspartate 176, histidine 179, histidine 210, aspartate 223, histidine 225, and glutamate 255 together coordinate Zn(2+).

It belongs to the AP endonuclease 2 family. Requires Zn(2+) as cofactor.

The enzyme catalyses Endonucleolytic cleavage to 5'-phosphooligonucleotide end-products.. Endonuclease IV plays a role in DNA repair. It cleaves phosphodiester bonds at apurinic or apyrimidinic (AP) sites, generating a 3'-hydroxyl group and a 5'-terminal sugar phosphate. This chain is Probable endonuclease 4, found in Mycoplasmopsis agalactiae (strain NCTC 10123 / CIP 59.7 / PG2) (Mycoplasma agalactiae).